The chain runs to 880 residues: Zinc-responsive transcriptional regulator ZAP1 (880 aa).

Disordered stretches follow at residues 1-26 (MDAL…AASA) and 140-164 (NNFH…PRRK). Positions 17–26 (ATSAATAASA) are enriched in low complexity. The segment covering 147–158 (SDPTSPQQNSKS) has biased composition (polar residues). Phosphoserine occurs at positions 156 and 166. Positions 182 to 502 (KPNPPPGSDD…LTNNDLNDLI (321 aa)) are zinc-responsive domain 1 (ZRD(AD1)). The transcription activation domain 1 (AD1) stretch occupies residues 207-402 (HPKSEANIKQ…YEVPFGKHIN (196 aa)). 2 disordered regions span residues 436–482 (NRCN…VNNS) and 510–555 (RFRN…PSSI). Positions 442–456 (NNLNGSNNNTAGATS) are enriched in low complexity. A compositionally biased stretch (basic residues) spans 460–474 (QHHHHRIQFHSHKPN). S515 bears the Phosphoserine mark. A compositionally biased stretch (low complexity) spans 545–555 (SSLEDSLPSSI). The C2H2-type 1 zinc-finger motif lies at 579-604 (LKCKWKECPESCSSLFDLQRHLLKDH). Residues 579–641 (LKCKWKECPE…SIVNHINCQH (63 aa)) are zinc-responsive domain 2 (ZRD(AD2)). The Zn(2+) site is built by C581, C586, H599, H604, C618, C623, H636, and H641. Residues 611-640 (HPMEPLACNWEDCDFLGDDTCSIVNHINCQ) are transcription activation domain 2 (AD2). The C2H2-type 2; atypical zinc finger occupies 616–641 (LACNWEDCDFLGDDTCSIVNHINCQH). 5 consecutive C2H2-type zinc fingers follow at residues 705–730 (VICQ…EAVH), 738–762 (YQCL…LKVH), 768–790 (YKCK…TRTH), 796–818 (YKCH…IRTH), and 824–846 (LQCK…IKTH). Residues 705–846 (VICQWDGCNK…SNLSKHIKTH (142 aa)) constitute a DNA-binding region (DNA-binding domain).

It localises to the nucleus. Its activity is regulated as follows. Active in zinc-limited cells and repressed in replete cells. Zinc controls ZAP1 DNA binding activity. In terms of biological role, transcription regulator controlling zinc-responsive gene expression. Binds to zinc-responsive elements (ZREs) (consensus sequence 5'-ACCYYNAAGGT-3') in the promoter of target genes. Recruits SWI/SNF, SAGA, and Mediator complexes as coactivators in a zinc-responsive manner. Involved in zinc ion homeostasis by zinc-responsive transcriptional regulation of the zinc uptake system genes ZTR1 and ZTR2. Positively regulates ETR1 expression, affecting mitochondrial function. This Saccharomyces cerevisiae (strain ATCC 204508 / S288c) (Baker's yeast) protein is Zinc-responsive transcriptional regulator ZAP1 (ZAP1).